Here is a 415-residue protein sequence, read N- to C-terminus: Serine--tRNA ligase (415 aa).

Position 231–233 (231–233 (TAE)) interacts with L-serine. Position 262–264 (262–264 (RSE)) interacts with ATP. Glu285 is a binding site for L-serine. Residue 349–352 (EISS) coordinates ATP. L-serine is bound at residue Ser383.

This sequence belongs to the class-II aminoacyl-tRNA synthetase family. Type-1 seryl-tRNA synthetase subfamily. Homodimer. The tRNA molecule binds across the dimer.

It is found in the cytoplasm. It catalyses the reaction tRNA(Ser) + L-serine + ATP = L-seryl-tRNA(Ser) + AMP + diphosphate + H(+). The catalysed reaction is tRNA(Sec) + L-serine + ATP = L-seryl-tRNA(Sec) + AMP + diphosphate + H(+). It functions in the pathway aminoacyl-tRNA biosynthesis; selenocysteinyl-tRNA(Sec) biosynthesis; L-seryl-tRNA(Sec) from L-serine and tRNA(Sec): step 1/1. Its function is as follows. Catalyzes the attachment of serine to tRNA(Ser). Is also able to aminoacylate tRNA(Sec) with serine, to form the misacylated tRNA L-seryl-tRNA(Sec), which will be further converted into selenocysteinyl-tRNA(Sec). The polypeptide is Serine--tRNA ligase (Helicobacter pylori (strain HPAG1)).